Reading from the N-terminus, the 352-residue chain is Phosphate acyltransferase (352 aa).

The protein belongs to the PlsX family. In terms of assembly, homodimer. Probably interacts with PlsY.

The protein resides in the cytoplasm. The catalysed reaction is a fatty acyl-[ACP] + phosphate = an acyl phosphate + holo-[ACP]. It functions in the pathway lipid metabolism; phospholipid metabolism. Catalyzes the reversible formation of acyl-phosphate (acyl-PO(4)) from acyl-[acyl-carrier-protein] (acyl-ACP). This enzyme utilizes acyl-ACP as fatty acyl donor, but not acyl-CoA. In Bordetella bronchiseptica (strain ATCC BAA-588 / NCTC 13252 / RB50) (Alcaligenes bronchisepticus), this protein is Phosphate acyltransferase.